The primary structure comprises 577 residues: BICD family-like cargo adapter 1 (577 aa).

The disordered stretch occupies residues 63–100 (LLAAGERSSEPGEHPQAEPESPVEGHGPPLPPPPTQDP). Residues 69–79 (RSSEPGEHPQA) are compositionally biased toward basic and acidic residues. Positions 116–120 (AARLG) match the CC1 box motif. The stretch at 121 to 379 (KALLERNQDM…QLWEAYCQVR (259 aa)) forms a coiled coil. The disordered stretch occupies residues 389–415 (DSADSAVSTDSSMDESSETSSAKDVPA). Low complexity predominate over residues 390 to 399 (SADSAVSTDS). A coiled-coil region spans residues 443-528 (LSVEMTALKE…LEAWQDDMHR (86 aa)).

It belongs to the BICDR family. As to quaternary structure, part of a tripartite complex with dynein and dynactin, acts an adapter linking the dynein motor complex and dynactin. Interacts with KIF1C. Interacts with RAB6A and RAB6B; interaction is specific to Rab6. In terms of tissue distribution, highly expressed during early embryonic development. Predominantly expressed in kidney, undifferentiated neural tissue and developing eye.

It is found in the cytoplasm. The protein resides in the cytoskeleton. Its subcellular location is the microtubule organizing center. The protein localises to the centrosome. Its function is as follows. Acts as an adapter protein linking the dynein motor complex to various cargos and converts dynein from a non-processive to a highly processive motor in the presence of dynactin. Facilitates the interaction between dynein and dynactin and activates dynein processivity (the ability to move along a microtubule for a long distance without falling off the track). Predominantly recruits 2 dyneins, which increases both the force and speed of the microtubule motor. Component of secretory vesicle machinery in developing neurons that acts as a regulator of neurite outgrowth. Regulates the secretory vesicle transport by controlling the accumulation of Rab6-containing secretory vesicles in the pericentrosomal region restricting anterograde secretory transport during the early phase of neuronal differentiation, thereby inhibiting neuritogenesis. This chain is BICD family-like cargo adapter 1 (Bicdl1), found in Mus musculus (Mouse).